A 147-amino-acid chain; its full sequence is Putative nickel-responsive regulator (147 aa).

Ni(2+)-binding residues include H76, H87, H89, and C95.

The protein belongs to the transcriptional regulatory CopG/NikR family. Ni(2+) is required as a cofactor.

Its function is as follows. Transcriptional regulator. This Rhodopseudomonas palustris (strain TIE-1) protein is Putative nickel-responsive regulator.